Here is a 155-residue protein sequence, read N- to C-terminus: UPF0225 protein ECA2332 (155 aa).

This sequence belongs to the UPF0225 family.

The sequence is that of UPF0225 protein ECA2332 from Pectobacterium atrosepticum (strain SCRI 1043 / ATCC BAA-672) (Erwinia carotovora subsp. atroseptica).